A 956-amino-acid polypeptide reads, in one-letter code: RNA-binding protein 44 (956 aa).

The tract at residues 301–321 (DNTQNNQNQSYNPTEENDHNV) is disordered. The RRM domain maps to 750–824 (SLLCITCLPG…HAVQVVHLSG (75 aa)). Positions 831–855 (KPSDLSHSASESHKEDTAGDELRTK) are disordered. Over residues 840–854 (SESHKEDTAGDELRT) the composition is skewed to basic and acidic residues.

Its subcellular location is the cytoplasm. Its function is as follows. Component of intercellular bridges during meiosis. Intercellular bridges are evolutionarily conserved structures that connect differentiating germ cells. Not required for fertility. The chain is RNA-binding protein 44 (rbm44) from Danio rerio (Zebrafish).